The following is a 210-amino-acid chain: Noranthrone monooxygenase (210 aa).

The next 4 helical transmembrane spans lie at 59-79 (TGSF…PILI), 105-125 (GIAL…YSVG), 131-151 (WMVA…FMNA), and 188-208 (VRAL…CGVV).

This sequence belongs to the anthrone oxygenase family.

The protein localises to the membrane. It carries out the reaction noranthrone + O2 = norsolorinic acid + H2O. It participates in mycotoxin biosynthesis; aflatoxin biosynthesis. Monooxygenase that converts norsolorinic acid anthrone to norsolorinic acid during aflatoxin biosynthesis. The sequence is that of Noranthrone monooxygenase (hypC) from Aspergillus flavus (strain ATCC 200026 / FGSC A1120 / IAM 13836 / NRRL 3357 / JCM 12722 / SRRC 167).